A 224-amino-acid polypeptide reads, in one-letter code: 2-C-methyl-D-erythritol 4-phosphate cytidylyltransferase (224 aa).

This sequence belongs to the IspD/TarI cytidylyltransferase family. IspD subfamily.

The enzyme catalyses 2-C-methyl-D-erythritol 4-phosphate + CTP + H(+) = 4-CDP-2-C-methyl-D-erythritol + diphosphate. The protein operates within isoprenoid biosynthesis; isopentenyl diphosphate biosynthesis via DXP pathway; isopentenyl diphosphate from 1-deoxy-D-xylulose 5-phosphate: step 2/6. Its function is as follows. Catalyzes the formation of 4-diphosphocytidyl-2-C-methyl-D-erythritol from CTP and 2-C-methyl-D-erythritol 4-phosphate (MEP). In Clostridium botulinum (strain Eklund 17B / Type B), this protein is 2-C-methyl-D-erythritol 4-phosphate cytidylyltransferase.